The following is a 193-amino-acid chain: dTTP/UTP pyrophosphatase (193 aa).

The active-site Proton acceptor is the aspartate 71.

This sequence belongs to the Maf family. YhdE subfamily. It depends on a divalent metal cation as a cofactor.

It localises to the cytoplasm. It carries out the reaction dTTP + H2O = dTMP + diphosphate + H(+). The enzyme catalyses UTP + H2O = UMP + diphosphate + H(+). In terms of biological role, nucleoside triphosphate pyrophosphatase that hydrolyzes dTTP and UTP. May have a dual role in cell division arrest and in preventing the incorporation of modified nucleotides into cellular nucleic acids. The chain is dTTP/UTP pyrophosphatase from Citrifermentans bemidjiense (strain ATCC BAA-1014 / DSM 16622 / JCM 12645 / Bem) (Geobacter bemidjiensis).